Consider the following 152-residue polypeptide: Kininogen-1c (152 aa).

The signal sequence occupies residues 1–23; it reads MRLWFCLSLFIVLCLEHFPGTLA. The span at 28-44 shows a compositional bias: basic and acidic residues; sequence VPESEEKTEQFLRDLPK. The segment at 28–152 is disordered; that stretch reads VPESEEKTEQ…RGKFHSQSHV (125 aa).

This sequence belongs to the bradykinin-related peptide family. Expressed by the skin glands.

The protein localises to the secreted. Functionally, potent vasodilator. Binds B1 (BDKRB1) and B2 (BDKRB2) bradykinin receptors. In Bombina maxima (Giant fire-bellied toad), this protein is Kininogen-1c.